The sequence spans 147 residues: Cytochrome c-type biogenesis protein CcmE (147 aa).

Residues 1 to 9 are Cytoplasmic-facing; the sequence is MKSLKKKRR. The helical; Signal-anchor for type II membrane protein transmembrane segment at 10 to 30 threads the bilayer; sequence IQILVAAAVALVLAVGLIGYG. Topologically, residues 31 to 147 are periplasmic; that stretch reads FRDGINLYRS…EQGVYQEPNS (117 aa). Positions 123 and 127 each coordinate heme.

The protein belongs to the CcmE/CycJ family.

It localises to the cell inner membrane. Functionally, heme chaperone required for the biogenesis of c-type cytochromes. Transiently binds heme delivered by CcmC and transfers the heme to apo-cytochromes in a process facilitated by CcmF and CcmH. The polypeptide is Cytochrome c-type biogenesis protein CcmE (Paracoccus denitrificans (strain Pd 1222)).